A 141-amino-acid chain; its full sequence is Nucleoside diphosphate kinase (141 aa).

ATP contacts are provided by Lys11, Phe59, Arg87, Thr93, Arg104, and Asn114. His117 (pros-phosphohistidine intermediate) is an active-site residue.

The protein belongs to the NDK family. In terms of assembly, homotetramer. It depends on Mg(2+) as a cofactor.

The protein resides in the cytoplasm. The catalysed reaction is a 2'-deoxyribonucleoside 5'-diphosphate + ATP = a 2'-deoxyribonucleoside 5'-triphosphate + ADP. It catalyses the reaction a ribonucleoside 5'-diphosphate + ATP = a ribonucleoside 5'-triphosphate + ADP. Its function is as follows. Major role in the synthesis of nucleoside triphosphates other than ATP. The ATP gamma phosphate is transferred to the NDP beta phosphate via a ping-pong mechanism, using a phosphorylated active-site intermediate. The chain is Nucleoside diphosphate kinase from Yersinia enterocolitica serotype O:8 / biotype 1B (strain NCTC 13174 / 8081).